The chain runs to 894 residues: MMMNSTIRQGWQQVLRRFSIPASGDRLIVSNSTDQPIGLFGAFDTSLQTLSQVTNDPEILKQKSNIPTHLDIASVLETSPRSFPWVFLTNSFCTFGGSIHAQNLQAFATAEFKSGFCYMNLLIPLSFDIIDAHADSFRGFVEQLPDTLGAYPSLSMVLNVMLHAATRFPEIVASPVPTIAFDAESLQFHVTDKRGVPGMWNILKACRVYELLSLAADGIGCEYMLYPVGAAPQYSFWKKSMDHFISDRFVEFLAMQGLLASALEQDYKTHDARDALLTALQNAGYTNVVARERRFPNGHDPSTVWLNLNEAPISEKLTELKRYLLVGHRSDEIADITHNVHQHVFEVLKTMSVQFSKTTNAYNRARFEVNHEVIWNAEYGRSSQQNAELEALVLFLNRQSLEIENILRRTTSPVVVTNWQPDVPPAAPEISEGEPTHAVATPITEAPTHATPVEVVNLPPTRSYWAETLVGVLTAILGTIFALLTRALIRPKRLRRKSTFPWVSLDSGDEDDDHSGGGGGSPQTPGGQPPASPAPGTHQSRFSVQDIASDTSLLSVDLDEDTLSQYDETFQTIRRALFENSFGDILQNSARWISTLEAMALADGNAPYTLLAQYLNGIEEAYTNFRNTGHISRATLSGFFVLEDSLRAAGIAFGGTTPTQTIQNQSADSPARRWKTRFEQIACELGDASIKSLADLADIIDTERERGDLTQFDVLAASSISSLCRAVRIISDTTDPNTQLALVENATAMQNNINAILGTNVSIPFLSATRRLLITRRIQEAGAESRSGATPDTIQQLADAELAEIVSEANMFNEMAASQRDIANATREATIREHVLSPVNALANVGMAAAFFRSGGLRSRAFHPTMPTMPGSPAAIGRPMFQAFRGRGHRLNRR.

Positions 109–229 (TAEFKSGFCY…GCEYMLYPVG (121 aa)) constitute a Peptidase C6 domain. Active-site for helper component proteinase activity residues include cysteine 117 and histidine 189. The segment at 502-539 (WVSLDSGDEDDDHSGGGGGSPQTPGGQPPASPAPGTHQ) is disordered.

It belongs to the bymoviruses polyprotein 2 family. Post-translationally, the viral RNA2 of bymoviruses is expressed as a single polyprotein which undergoes post-translational proteolytic processing resulting in the production of at least two individual proteins. The HC-pro cleaves its C-terminus autocatalytically (Potential).

It catalyses the reaction Hydrolyzes a Gly-|-Gly bond at its own C-terminus, commonly in the sequence -Tyr-Xaa-Val-Gly-|-Gly, in the processing of the potyviral polyprotein.. This chain is Genome polyprotein 2 (RNA2), found in Hordeum vulgare (Barley).